Reading from the N-terminus, the 215-residue chain is uncharacterized protein (215 aa).

S-adenosyl-L-methionine-binding residues include G53, E74, and D97.

The protein belongs to the methyltransferase superfamily. YrrT family.

Functionally, could be a S-adenosyl-L-methionine-dependent methyltransferase. This is an uncharacterized protein from Geobacillus kaustophilus (strain HTA426).